A 215-amino-acid chain; its full sequence is Cytochrome b6 (215 aa).

The helical transmembrane segment at Ile32–Phe52 threads the bilayer. Cys35 contacts heme c. 2 residues coordinate heme b: His86 and His100. The next 3 helical transmembrane spans lie at Ala90–Phe110, Ser116–Tyr136, and Leu186–Ile206. The heme b site is built by His187 and His202.

This sequence belongs to the cytochrome b family. PetB subfamily. The 4 large subunits of the cytochrome b6-f complex are cytochrome b6, subunit IV (17 kDa polypeptide, PetD), cytochrome f and the Rieske protein, while the 4 small subunits are PetG, PetL, PetM and PetN. The complex functions as a dimer. Requires heme b as cofactor. The cofactor is heme c.

It localises to the plastid. The protein resides in the chloroplast thylakoid membrane. In terms of biological role, component of the cytochrome b6-f complex, which mediates electron transfer between photosystem II (PSII) and photosystem I (PSI), cyclic electron flow around PSI, and state transitions. This chain is Cytochrome b6, found in Tetradesmus obliquus (Green alga).